The primary structure comprises 282 residues: MKLVLVSGRSGSGKSVALRVLEDLGYYCVDNLPLQMMESLLEQLKGRSDLVAISVDVRNMPSEEIQLEKQLAKLPKDTEILSFFLNSSDNVLLKRYSETRRLHPLSRSKVSLKEAIQLEGKLLDPIAKLVDHYIDTSNLNIYELSDKVREILLGTVDKELVINFESFGFKYGMPTEADFMFDVRFLPNPHWETELRPLTGLDEPVQQFLSQQPLVNKFIWQIENLLETWLPHLERNNRSYLTIAIGCTGGQHRSVYVTDQLAKLFNKGKHKVQARHRELKHD.

An ATP-binding site is contributed by 8–15 (GRSGSGKS). Position 56–59 (56–59 (DVRN)) interacts with GTP.

The protein belongs to the RapZ-like family.

Its function is as follows. Displays ATPase and GTPase activities. This chain is Nucleotide-binding protein Shew_3314, found in Shewanella loihica (strain ATCC BAA-1088 / PV-4).